A 197-amino-acid polypeptide reads, in one-letter code: A-type ATP synthase subunit E 2 (197 aa).

The protein belongs to the V-ATPase E subunit family. In terms of assembly, has multiple subunits with at least A(3), B(3), C, D, E, F, H, I and proteolipid K(x).

The protein resides in the cell membrane. Component of the A-type ATP synthase that produces ATP from ADP in the presence of a proton gradient across the membrane. This chain is A-type ATP synthase subunit E 2, found in Methanospirillum hungatei JF-1 (strain ATCC 27890 / DSM 864 / NBRC 100397 / JF-1).